The primary structure comprises 97 residues: DNA-directed RNA polymerase subunit omega (97 aa).

The segment covering 1 to 16 (MSTPNALAAFNSSPSL) has biased composition (polar residues). The tract at residues 1–21 (MSTPNALAAFNSSPSLNAPEG) is disordered.

Belongs to the RNA polymerase subunit omega family. As to quaternary structure, the RNAP catalytic core consists of 2 alpha, 1 beta, 1 beta' and 1 omega subunit. When a sigma factor is associated with the core the holoenzyme is formed, which can initiate transcription.

The enzyme catalyses RNA(n) + a ribonucleoside 5'-triphosphate = RNA(n+1) + diphosphate. Promotes RNA polymerase assembly. Latches the N- and C-terminal regions of the beta' subunit thereby facilitating its interaction with the beta and alpha subunits. The polypeptide is DNA-directed RNA polymerase subunit omega (Saccharopolyspora erythraea (strain ATCC 11635 / DSM 40517 / JCM 4748 / NBRC 13426 / NCIMB 8594 / NRRL 2338)).